Reading from the N-terminus, the 1780-residue chain is Chitin synthase Vb (1780 aa).

N-linked (GlcNAc...) asparagine glycosylation is found at asparagine 133, asparagine 153, asparagine 629, asparagine 644, asparagine 655, and asparagine 660. 2 helical membrane passes run 740-760 (AWIA…LKFI) and 776-796 (FVLF…IIGF). In terms of domain architecture, Cytochrome b5 heme-binding spans 805-866 (NKAWNVKEVA…LSGMVMDNYF (62 aa)). N-linked (GlcNAc...) asparagine glycans are attached at residues asparagine 888 and asparagine 1009. Residues 1046–1066 (LLLAFAIIICIVTAVKFLAAL) form a helical membrane-spanning segment. A glycan (N-linked (GlcNAc...) asparagine) is linked at asparagine 1411. A run of 3 helical transmembrane segments spans residues 1442–1462 (LCGT…IYIL), 1469–1489 (IPYI…LIFI), and 1497–1517 (IGWM…LPLY). The N-linked (GlcNAc...) asparagine glycan is linked to asparagine 1524. The interval 1649–1691 (TGVHDMRSQSPYQDYPGQHPSVSNLRGQANLSPATGGGHSRSG) is disordered. Polar residues predominate over residues 1668-1681 (PSVSNLRGQANLSP). Residues 1722-1778 (GPNDMAIVESIRSVLCEVDLDTVTKKQVRALVEQRLQTELVGERRTFMDRQIDHELE) form the DEK-C domain.

The protein belongs to the chitin synthase family. Class VII subfamily.

The protein resides in the cell membrane. It catalyses the reaction [(1-&gt;4)-N-acetyl-beta-D-glucosaminyl](n) + UDP-N-acetyl-alpha-D-glucosamine = [(1-&gt;4)-N-acetyl-beta-D-glucosaminyl](n+1) + UDP + H(+). In terms of biological role, polymerizes chitin, a structural polymer of the cell wall and septum, by transferring the sugar moiety of UDP-GlcNAc to the non-reducing end of the growing chitin polymer. ChsV and chsVb do perform additive, but not redundant, functions in septum formation. Functions not only in the maintenance of cell wall integrity under different osmotic conditions but also in polarized cell wall synthesis. Plays an important role in the complex infection process of this fungus. This is Chitin synthase Vb from Fusarium oxysporum f. sp. lycopersici (strain 4287 / CBS 123668 / FGSC 9935 / NRRL 34936) (Fusarium vascular wilt of tomato).